Reading from the N-terminus, the 422-residue chain is Acylglycerol kinase, mitochondrial (422 aa).

Lysine 6 bears the N6-acetyllysine mark. Residues 15–31 form a hydrophobic region; the sequence is TTAGLCLLTWGGHWLYG. The DAGKc domain maps to 58-199; the sequence is AQVKKATVFL…LDVLQIKGEK (142 aa). The disordered stretch occupies residues 249–271; it reads QASISYTGPTERPPSEPEETPVQ.

The protein belongs to the AGK family. In terms of assembly, component of the TIM22 complex, which core is composed of TIMM22, associated with TIMM10 (TIMM10A and/or TIMM10B), TIMM9, AGK and TIMM29. Interacts with SMIM26. Mg(2+) serves as cofactor.

The protein localises to the mitochondrion inner membrane. It localises to the mitochondrion intermembrane space. It catalyses the reaction a monoacylglycerol + ATP = a monoacyl-sn-glycero-3-phosphate + ADP + H(+). The catalysed reaction is a 1,2-diacyl-sn-glycerol + ATP = a 1,2-diacyl-sn-glycero-3-phosphate + ADP + H(+). The enzyme catalyses an N-acylsphing-4-enine + ATP = an N-acylsphing-4-enine 1-phosphate + ADP + H(+). It carries out the reaction 1-(9Z-octadecenoyl)-sn-glycerol + ATP = 1-(9Z-octadecenoyl)-sn-glycero-3-phosphate + ADP + H(+). It catalyses the reaction 1,2-di-(9Z-octadecenoyl)-sn-glycerol + ATP = 1,2-di-(9Z-octadecenoyl)-sn-glycero-3-phosphate + ADP + H(+). The catalysed reaction is a 1-acyl-sn-glycerol + ATP = a 1-acyl-sn-glycero-3-phosphate + ADP + H(+). The enzyme catalyses 1-hexadecanoyl-sn-glycerol + ATP = 1-hexadecanoyl-sn-glycero-3-phosphate + ADP + H(+). It carries out the reaction a 2-acylglycerol + ATP = a 2-acyl-sn-glycerol 3-phosphate + ADP + H(+). It catalyses the reaction 2-(5Z,8Z,11Z,14Z-eicosatetraenoyl)-glycerol + ATP = 2-(5Z,8Z,11Z,14Z-eicosatetraenoyl)-sn-glycero-3-phosphate + ADP + H(+). The catalysed reaction is 1-(5Z,8Z,11Z,14Z-eicosatetraenoyl)-sn-glycerol + ATP = 1-(5Z,8Z,11Z,14Z-eicosatetraenoyl)-sn-glycero-3-phosphate + ADP + H(+). The enzyme catalyses N-(hexanoyl)sphing-4-enine + ATP = N-hexanoylsphing-4-enine 1-phosphate + ADP + H(+). It participates in lipid metabolism; glycerolipid metabolism. Its function is as follows. Lipid kinase that can phosphorylate both monoacylglycerol and diacylglycerol to form lysophosphatidic acid (LPA) and phosphatidic acid (PA), respectively. Phosphorylates ceramide but not sphingosine. Phosphorylates 1,2-dioleoylglycerol more rapidly than 2,3-dioleoylglycerol. Independently of its lipid kinase activity, acts as a component of the TIM22 complex. The TIM22 complex mediates the import and insertion of multi-pass transmembrane proteins into the mitochondrial inner membrane by forming a twin-pore translocase that uses the membrane potential as the external driving force. In the TIM22 complex, required for the import of a subset of metabolite carriers into mitochondria, such as ANT1/SLC25A4 and SLC25A24, while it is not required for the import of TIMM23. Overexpression increases the formation and secretion of LPA, resulting in transactivation of EGFR and activation of the downstream MAPK signaling pathway, leading to increased cell growth. This is Acylglycerol kinase, mitochondrial from Pongo abelii (Sumatran orangutan).